Here is a 186-residue protein sequence, read N- to C-terminus: Testis-expressed protein 29 (186 aa).

Topologically, residues 1-56 (MKDTKEIKRSPPHLLKKFAVCDIPLYDICDYNVTRERCRSLDCCFYRGVCYEKAVP) are extracellular. Residues 57-77 (IYVQVFFTLIWFVAGAFIIAV) form a helical membrane-spanning segment. Topologically, residues 78–151 (IYRVIQGTKK…AGCCLWMKSK (74 aa)) are cytoplasmic. Disordered stretches follow at residues 104-138 (SPTP…KTES) and 151-186 (KPAK…QAAP). A compositionally biased stretch (pro residues) spans 108 to 133 (ELIPEPIPEPIPEPIPEPIREPPPPV).

It is found in the membrane. This Mus musculus (Mouse) protein is Testis-expressed protein 29 (Tex29).